The chain runs to 125 residues: MGCVLLFLLLVCVPVVLPQGLRCLFCPVTSLNSSCAPVVTECPVQELCYTADGRFGRSSVLFRKGCMLRADCSRSRHQMIRGNNISFSFSCCGGHYCNSQPRAEPGGRLLLLLLPAAALTAAGAL.

The first 18 residues, 1–18 (MGCVLLFLLLVCVPVVLP), serve as a signal peptide directing secretion. 5 disulfides stabilise this stretch: Cys23-Cys48, Cys26-Cys35, Cys42-Cys66, Cys72-Cys91, and Cys92-Cys97. The 76-residue stretch at 23 to 98 (CLFCPVTSLN…FSCCGGHYCN (76 aa)) folds into the UPAR/Ly6 domain. The N-linked (GlcNAc...) asparagine glycan is linked to Asn32. The N-linked (GlcNAc...) asparagine glycan is linked to Asn84. Asn98 carries GPI-anchor amidated asparagine lipidation. A propeptide spans 99 to 125 (SQPRAEPGGRLLLLLLPAAALTAAGAL) (removed in mature form).

It belongs to the SPACA4/bouncer family. Interacts with spermatocyte complex composed of izumo1, spaca6 and tmem81. N-glycosylated. Highly expressed in oocytes. Not expressed in testis.

The protein resides in the cell membrane. Its function is as follows. Oocyte-expressed fertilization factor that mediates sperm-egg binding and is essential for sperm entry into the egg. Necessary and sufficient to mediate species-specific gamete recognition and fertilization, which is essential for vertebrate species performing external fertilization. External fertilization cannot guarantee that only conspecific sperm reaches the egg by precopulatory mate choice: proteins such as Bouncer can therefore support the selection of conspecific sperm. The protein is Protein Bouncer of Danio rerio (Zebrafish).